Here is a 221-residue protein sequence, read N- to C-terminus: MFTNPFGRKKDMSDDQKKNNQPDTEADNAENIKFAADDTELRAGDETDADFEMPEGFPEMDENMFGQVQEMMAKLERVDELEKENADLKNRLGRLASDFEGYRNRTTIESAEAHDKGVSKAAEALMPVYDDIDRALSLSVDDAAKLVPGMQAVQNKVLTIFGTLGLEATGREGEQFDPQWHEAIQVVAGDEDEKIVQTYQLGFKMGDRLVRPARVVVSRKG.

The disordered stretch occupies residues 1–43 (MFTNPFGRKKDMSDDQKKNNQPDTEADNAENIKFAADDTELRA). Residues 8–20 (RKKDMSDDQKKNN) are compositionally biased toward basic and acidic residues.

This sequence belongs to the GrpE family. As to quaternary structure, homodimer.

Its subcellular location is the cytoplasm. Functionally, participates actively in the response to hyperosmotic and heat shock by preventing the aggregation of stress-denatured proteins, in association with DnaK and GrpE. It is the nucleotide exchange factor for DnaK and may function as a thermosensor. Unfolded proteins bind initially to DnaJ; upon interaction with the DnaJ-bound protein, DnaK hydrolyzes its bound ATP, resulting in the formation of a stable complex. GrpE releases ADP from DnaK; ATP binding to DnaK triggers the release of the substrate protein, thus completing the reaction cycle. Several rounds of ATP-dependent interactions between DnaJ, DnaK and GrpE are required for fully efficient folding. The chain is Protein GrpE from Deinococcus radiodurans (strain ATCC 13939 / DSM 20539 / JCM 16871 / CCUG 27074 / LMG 4051 / NBRC 15346 / NCIMB 9279 / VKM B-1422 / R1).